Reading from the N-terminus, the 459-residue chain is MYKIDFNNPIHIHFIGIGGISMSGLAKILLSKGFSVSGSDSHSSALTDELIGDGCLVSVPQSAGNITNDIDLVVYTAAIHPDNPEFKAAKEAGLPMLTRAELLGQIMTVYKNAINIAGTHGKTTTTSMVSEILLAASMDPTISVGGILNSIGGNTRVGGDNYFVAEACEYTNSFLSFNPTMNIILNVKEDHLDFFKDIDDIRHSFKLFTEKLPSDGTLIINTDIDNYEYFYQDTDCEVITFGSDPAKSMYSASDIAYDELGRCTYSLLINGEKADTITLGVPGLHNVYNSLAAIAATRKLSVDMEHIKAGLSNFKGTNRRFEKKGTFNGVTVIDDYAHHPDEIRATLSSAAHYPHNRVWVVFQPHTYSRTKLLFNEFADALSHADKVVLAKIYAARETDTLGISSADLCEKIKSLGKECVYIDNFEDIEKYLLKNCINGDLLITMGAGDIYKVGEDLLK.

118–124 (GTHGKTT) is an ATP binding site.

It belongs to the MurCDEF family.

It localises to the cytoplasm. The catalysed reaction is UDP-N-acetyl-alpha-D-muramate + L-alanine + ATP = UDP-N-acetyl-alpha-D-muramoyl-L-alanine + ADP + phosphate + H(+). It functions in the pathway cell wall biogenesis; peptidoglycan biosynthesis. Cell wall formation. The chain is UDP-N-acetylmuramate--L-alanine ligase from Lachnospira eligens (strain ATCC 27750 / DSM 3376 / VPI C15-48 / C15-B4) (Eubacterium eligens).